A 356-amino-acid polypeptide reads, in one-letter code: Competence protein ComGA (356 aa).

144 to 151 is an ATP binding site; that stretch reads GPTGSGKT.

Belongs to the GSP E family.

The protein localises to the cell membrane. Its function is as follows. Required for uptake of DNA by competent cells. The chain is Competence protein ComGA (comGA) from Bacillus subtilis (strain 168).